The following is a 95-amino-acid chain: Protein TusB (95 aa).

Belongs to the DsrH/TusB family. Heterohexamer, formed by a dimer of trimers. The hexameric TusBCD complex contains 2 copies each of TusB, TusC and TusD. The TusBCD complex interacts with TusE.

It localises to the cytoplasm. In terms of biological role, part of a sulfur-relay system required for 2-thiolation of 5-methylaminomethyl-2-thiouridine (mnm(5)s(2)U) at tRNA wobble positions. The sequence is that of Protein TusB from Yersinia enterocolitica serotype O:8 / biotype 1B (strain NCTC 13174 / 8081).